A 122-amino-acid polypeptide reads, in one-letter code: UPF0102 protein ECH_0093 (122 aa).

This sequence belongs to the UPF0102 family.

This is UPF0102 protein ECH_0093 from Ehrlichia chaffeensis (strain ATCC CRL-10679 / Arkansas).